The sequence spans 224 residues: PKHD-type hydroxylase SO_3913 (224 aa).

The 99-residue stretch at 78–176 (QFYPPLFNRY…RTSAFMWLQS (99 aa)) folds into the Fe2OG dioxygenase domain. Positions 96, 98, and 157 each coordinate Fe cation. R167 contacts 2-oxoglutarate.

The cofactor is Fe(2+). L-ascorbate is required as a cofactor.

This Shewanella oneidensis (strain ATCC 700550 / JCM 31522 / CIP 106686 / LMG 19005 / NCIMB 14063 / MR-1) protein is PKHD-type hydroxylase SO_3913.